Here is a 443-residue protein sequence, read N- to C-terminus: Xaa-Pro dipeptidase (443 aa).

Positions 246, 257, 339, 384, and 423 each coordinate Mn(2+).

The protein belongs to the peptidase M24B family. Bacterial-type prolidase subfamily. Requires Mn(2+) as cofactor.

The catalysed reaction is Xaa-L-Pro dipeptide + H2O = an L-alpha-amino acid + L-proline. Its function is as follows. Splits dipeptides with a prolyl residue in the C-terminal position. In Shigella flexneri serotype 5b (strain 8401), this protein is Xaa-Pro dipeptidase.